Consider the following 306-residue polypeptide: Curved DNA-binding protein (306 aa).

The J domain maps to 5 to 69 (DYYAIMGVKP…QRRAEYDQLW (65 aa)).

Its subcellular location is the cytoplasm. It localises to the nucleoid. DNA-binding protein that preferentially recognizes a curved DNA sequence. It is probably a functional analog of DnaJ; displays overlapping activities with DnaJ, but functions under different conditions, probably acting as a molecular chaperone in an adaptive response to environmental stresses other than heat shock. Lacks autonomous chaperone activity; binds native substrates and targets them for recognition by DnaK. Its activity is inhibited by the binding of CbpM. The polypeptide is Curved DNA-binding protein (Salmonella arizonae (strain ATCC BAA-731 / CDC346-86 / RSK2980)).